Here is a 302-residue protein sequence, read N- to C-terminus: Zygote arrest protein 2.S (302 aa).

3 disordered regions span residues 15–46 (YGGN…SEPP), 88–117 (VDTG…PTDC), and 138–195 (LPQG…EPNK). The segment covering 159-178 (LKDRGPSPEEKEPETKEALE) has biased composition (basic and acidic residues). A 3CxxC-type zinc finger spans residues 203-288 (QKYGYFHCKD…QELCGRCKNK (86 aa)).

Belongs to the ZAR1 family. Oocyte-specific.

It localises to the cytoplasm. It is found in the cytoplasmic ribonucleoprotein granule. Functionally, mRNA-binding protein required for maternal mRNA storage, translation and degradation during oocyte maturation. Probably promotes formation of some phase-separated membraneless compartment that stores maternal mRNAs in oocytes: acts by undergoing liquid-liquid phase separation upon binding to maternal mRNAs. Binds to the 3'-UTR of maternal mRNAs, inhibiting their translation. This Xenopus laevis (African clawed frog) protein is Zygote arrest protein 2.S.